Reading from the N-terminus, the 322-residue chain is Transaldolase (322 aa).

Catalysis depends on K136, which acts as the Schiff-base intermediate with substrate.

Belongs to the transaldolase family. Type 1 subfamily. Homodimer.

Its subcellular location is the cytoplasm. The catalysed reaction is D-sedoheptulose 7-phosphate + D-glyceraldehyde 3-phosphate = D-erythrose 4-phosphate + beta-D-fructose 6-phosphate. The protein operates within carbohydrate degradation; pentose phosphate pathway; D-glyceraldehyde 3-phosphate and beta-D-fructose 6-phosphate from D-ribose 5-phosphate and D-xylulose 5-phosphate (non-oxidative stage): step 2/3. Functionally, transaldolase is important for the balance of metabolites in the pentose-phosphate pathway. This is Transaldolase from Xanthomonas euvesicatoria pv. vesicatoria (strain 85-10) (Xanthomonas campestris pv. vesicatoria).